The following is a 349-amino-acid chain: Hydroxymethylglutaryl-CoA synthase (349 aa).

(3S)-3-hydroxy-3-methylglutaryl-CoA is bound by residues Asp-30 and Ala-31. Glu-82 functions as the Proton donor/acceptor in the catalytic mechanism. Cys-114 and Thr-155 together coordinate (3S)-3-hydroxy-3-methylglutaryl-CoA. The active-site Acyl-thioester intermediate is the Cys-114. Arg-203 provides a ligand contact to CoA. Residues Thr-205 and His-238 each contribute to the (3S)-3-hydroxy-3-methylglutaryl-CoA site. The active-site Proton donor/acceptor is His-238. Lys-243 is a binding site for CoA. Residues Asn-270 and Ser-300 each contribute to the (3S)-3-hydroxy-3-methylglutaryl-CoA site.

This sequence belongs to the thiolase-like superfamily. Archaeal HMG-CoA synthase family. In terms of assembly, interacts with acetoacetyl-CoA thiolase that catalyzes the precedent step in the pathway and with a DUF35 protein. The acetoacetyl-CoA thiolase/HMG-CoA synthase complex channels the intermediate via a fused CoA-binding site, which allows for efficient coupling of the endergonic thiolase reaction with the exergonic HMGCS reaction.

The enzyme catalyses acetoacetyl-CoA + acetyl-CoA + H2O = (3S)-3-hydroxy-3-methylglutaryl-CoA + CoA + H(+). It functions in the pathway metabolic intermediate biosynthesis; (R)-mevalonate biosynthesis; (R)-mevalonate from acetyl-CoA: step 2/3. Catalyzes the condensation of acetyl-CoA with acetoacetyl-CoA to form 3-hydroxy-3-methylglutaryl-CoA (HMG-CoA). Functions in the mevalonate (MVA) pathway leading to isopentenyl diphosphate (IPP), a key precursor for the biosynthesis of isoprenoid compounds that are building blocks of archaeal membrane lipids. This chain is Hydroxymethylglutaryl-CoA synthase, found in Methanococcus maripaludis (strain DSM 14266 / JCM 13030 / NBRC 101832 / S2 / LL).